Here is a 242-residue protein sequence, read N- to C-terminus: 3-deoxy-manno-octulosonate cytidylyltransferase (242 aa).

Belongs to the KdsB family.

The protein localises to the cytoplasm. The enzyme catalyses 3-deoxy-alpha-D-manno-oct-2-ulosonate + CTP = CMP-3-deoxy-beta-D-manno-octulosonate + diphosphate. It participates in nucleotide-sugar biosynthesis; CMP-3-deoxy-D-manno-octulosonate biosynthesis; CMP-3-deoxy-D-manno-octulosonate from 3-deoxy-D-manno-octulosonate and CTP: step 1/1. Its pathway is bacterial outer membrane biogenesis; lipopolysaccharide biosynthesis. In terms of biological role, activates KDO (a required 8-carbon sugar) for incorporation into bacterial lipopolysaccharide in Gram-negative bacteria. The polypeptide is 3-deoxy-manno-octulosonate cytidylyltransferase (Anaeromyxobacter sp. (strain K)).